The primary structure comprises 132 residues: Pro-MCH 1 (132 aa).

The N-terminal stretch at 1–24 (MRHYVLSISFAVALFLECYTPSTA) is a signal peptide. Residues Cys120 and Cys129 are joined by a disulfide bond.

Belongs to the melanin-concentrating hormone family. In terms of tissue distribution, pituitary gland. Produced in neurons of lateral basal hypothalamus which project both to the brain and to the neural lobe of the pituitary gland from where MCH is released.

Its function is as follows. Plays a role in skin pigmentation by antagonizing the action of melanotropin alpha. Induces melanin concentration within the melanophores. May participate in the control of the hypothalamo-pituitary adrenal gland axis by inhibiting the release of ACTH. This Oncorhynchus keta (Chum salmon) protein is Pro-MCH 1 (mch1).